The following is a 197-amino-acid chain: Protein-methionine-sulfoxide reductase heme-binding subunit MsrQ (197 aa).

6 helical membrane passes run I10 to L30, L42 to L62, L75 to L95, P110 to N130, L147 to L167, and E169 to A189.

Belongs to the MsrQ family. In terms of assembly, heterodimer of a catalytic subunit (MsrP) and a heme-binding subunit (MsrQ). Requires FMN as cofactor. It depends on heme b as a cofactor.

Its subcellular location is the cell inner membrane. Part of the MsrPQ system that repairs oxidized periplasmic proteins containing methionine sulfoxide residues (Met-O), using respiratory chain electrons. Thus protects these proteins from oxidative-stress damage caused by reactive species of oxygen and chlorine generated by the host defense mechanisms. MsrPQ is essential for the maintenance of envelope integrity under bleach stress, rescuing a wide series of structurally unrelated periplasmic proteins from methionine oxidation. MsrQ provides electrons for reduction to the reductase catalytic subunit MsrP, using the quinone pool of the respiratory chain. The chain is Protein-methionine-sulfoxide reductase heme-binding subunit MsrQ from Pseudomonas putida (strain ATCC 47054 / DSM 6125 / CFBP 8728 / NCIMB 11950 / KT2440).